The primary structure comprises 497 residues: Ectonucleoside triphosphate diphosphohydrolase 8 (497 aa).

Over 1 to 8 (MGLSWKER) the chain is Cytoplasmic. The chain crosses the membrane as a helical span at residues 9–29 (VFMALLGVAAASGLTMLVLIL). The Extracellular segment spans residues 30–473 (VKAINVLLPA…AQSYSIWTAG (444 aa)). Cysteines 78 and 102 form a disulfide. Glu-168 (proton acceptor) is an active-site residue. A disulfide bridge links Cys-245 with Cys-294. N-linked (GlcNAc...) asparagine glycosylation occurs at Asn-306. The cysteines at positions 331 and 337 are disulfide-linked. N-linked (GlcNAc...) asparagine glycosylation is present at Asn-365. Cys-383 and Cys-405 form a disulfide bridge. The helical transmembrane segment at 474 to 494 (VVFAVLTLVAILGAAAIQIFW) threads the bilayer. Topologically, residues 495–497 (TQD) are cytoplasmic.

This sequence belongs to the GDA1/CD39 NTPase family. Ca(2+) serves as cofactor. It depends on Mg(2+) as a cofactor. In terms of processing, N-glycosylated. Expressed in liver, jejunum and kidney.

The protein resides in the cell membrane. The enzyme catalyses a ribonucleoside 5'-triphosphate + 2 H2O = a ribonucleoside 5'-phosphate + 2 phosphate + 2 H(+). Functionally, canalicular ectonucleoside NTPDase responsible for the main hepatic NTPDase activity. Ectonucleoside NTPDases catalyze the hydrolysis of gamma- and beta-phosphate residues of nucleotides, playing a central role in concentration of extracellular nucleotides. Has activity toward ATP, ADP, UTP and UDP, but not toward AMP. This is Ectonucleoside triphosphate diphosphohydrolase 8 (Entpd8) from Mus musculus (Mouse).